The sequence spans 161 residues: uncharacterized protein (161 aa).

This is an uncharacterized protein from Saccharomyces cerevisiae (strain ATCC 204508 / S288c) (Baker's yeast).